Here is a 631-residue protein sequence, read N- to C-terminus: tRNA uridine 5-carboxymethylaminomethyl modification enzyme MnmG (631 aa).

Residue 13–18 (GGGHAG) coordinates FAD. 273–287 (GPRYCPSIEDKVNRF) contacts NAD(+).

Belongs to the MnmG family. Homodimer. Heterotetramer of two MnmE and two MnmG subunits. FAD is required as a cofactor.

Its subcellular location is the cytoplasm. NAD-binding protein involved in the addition of a carboxymethylaminomethyl (cmnm) group at the wobble position (U34) of certain tRNAs, forming tRNA-cmnm(5)s(2)U34. In Chromohalobacter salexigens (strain ATCC BAA-138 / DSM 3043 / CIP 106854 / NCIMB 13768 / 1H11), this protein is tRNA uridine 5-carboxymethylaminomethyl modification enzyme MnmG.